The chain runs to 308 residues: Mycothiol acetyltransferase (308 aa).

2 N-acetyltransferase domains span residues 8–155 and 160–308; these read RDVD…PRLR and VQVR…RRAR. Glu-39 is a binding site for 1D-myo-inositol 2-(L-cysteinylamino)-2-deoxy-alpha-D-glucopyranoside. Residue 84–86 coordinates acetyl-CoA; sequence LVV. 3 residues coordinate 1D-myo-inositol 2-(L-cysteinylamino)-2-deoxy-alpha-D-glucopyranoside: Glu-187, Lys-226, and Glu-240. Residues 244–246 and 251–257 contribute to the acetyl-CoA site; these read LGI and QGLGLGR. Residue Tyr-278 coordinates 1D-myo-inositol 2-(L-cysteinylamino)-2-deoxy-alpha-D-glucopyranoside.

Belongs to the acetyltransferase family. MshD subfamily. Monomer.

It carries out the reaction 1D-myo-inositol 2-(L-cysteinylamino)-2-deoxy-alpha-D-glucopyranoside + acetyl-CoA = mycothiol + CoA + H(+). Catalyzes the transfer of acetyl from acetyl-CoA to desacetylmycothiol (Cys-GlcN-Ins) to form mycothiol. This chain is Mycothiol acetyltransferase, found in Geodermatophilus obscurus (strain ATCC 25078 / DSM 43160 / JCM 3152 / CCUG 61914 / KCC A-0152 / KCTC 9177 / NBRC 13315 / NRRL B-3577 / G-20).